The primary structure comprises 259 residues: Acyl-[acyl-carrier-protein]--UDP-N-acetylglucosamine O-acyltransferase (259 aa).

This sequence belongs to the transferase hexapeptide repeat family. LpxA subfamily. Homotrimer.

The protein resides in the cytoplasm. The catalysed reaction is a (3R)-hydroxyacyl-[ACP] + UDP-N-acetyl-alpha-D-glucosamine = a UDP-3-O-[(3R)-3-hydroxyacyl]-N-acetyl-alpha-D-glucosamine + holo-[ACP]. It functions in the pathway glycolipid biosynthesis; lipid IV(A) biosynthesis; lipid IV(A) from (3R)-3-hydroxytetradecanoyl-[acyl-carrier-protein] and UDP-N-acetyl-alpha-D-glucosamine: step 1/6. Functionally, involved in the biosynthesis of lipid A, a phosphorylated glycolipid that anchors the lipopolysaccharide to the outer membrane of the cell. This is Acyl-[acyl-carrier-protein]--UDP-N-acetylglucosamine O-acyltransferase from Psychrobacter cryohalolentis (strain ATCC BAA-1226 / DSM 17306 / VKM B-2378 / K5).